Here is a 119-residue protein sequence, read N- to C-terminus: Acidic phospholipase A2 DE-III (119 aa).

7 disulfides stabilise this stretch: Cys11/Cys72, Cys26/Cys118, Cys28/Cys44, Cys43/Cys99, Cys50/Cys92, Cys60/Cys85, and Cys79/Cys90. Residues Tyr27, Gly29, and Gly31 each coordinate Ca(2+). His47 is a catalytic residue. Position 48 (Asp48) interacts with Ca(2+). The active site involves Asp93.

This sequence belongs to the phospholipase A2 family. Group I subfamily. D49 sub-subfamily. Ca(2+) serves as cofactor. As to expression, expressed by the venom gland.

The protein resides in the secreted. The catalysed reaction is a 1,2-diacyl-sn-glycero-3-phosphocholine + H2O = a 1-acyl-sn-glycero-3-phosphocholine + a fatty acid + H(+). PLA2 catalyzes the calcium-dependent hydrolysis of the 2-acyl groups in 3-sn-phosphoglycerides. The protein is Acidic phospholipase A2 DE-III of Naja melanoleuca (Forest cobra).